We begin with the raw amino-acid sequence, 76 residues long: ATP synthase subunit 9, mitochondrial (76 aa).

Methionine 1 is subject to N-formylmethionine. Helical transmembrane passes span 14 to 34 (LASIGLVGAGIGIAIVFAALI) and 52 to 72 (ILGFALSEATGLFALMIAFLL).

In terms of assembly, F-type ATP synthases have 2 components, the catalytic core F(1) and the membrane-embedded component F(0), linked together by a central stalk and a peripheral stalk. The central stalk, also called rotor shaft, is often seen as part of F(1). The peripheral stalk is seen as part of F(0). F(0) contains the membrane channel next to the rotor. F-type ATP synthases form dimers but each monomer functions independently in ATP generation. The dimer consists of 17 different polypeptides: ATP1 (subunit alpha, 3 molecules per monomer, part of F(1)), ATP2 (subunit beta, 3 copies per monomer, part of F(1)), ATP3 (subunit gamma, part of the central stalk), ATP4 (subunit b, part of the peripheral stalk), ATP5/OSCP (subunit 5/OSCP, part of the peripheral stalk), ATP6 (subunit a, part of the peripheral stalk), ATP7 (subunit d, part of the peripheral stalk), ATP8 (subunit 8, part of the peripheral stalk), OLI1 (subunit c, part of the rotor, 10 molecules per monomer), ATP14 (subunit h, part of the peripheral stalk), ATP15 (subunit epsilon, part of the central stalk), ATP16 (subunit delta, part of the central stalk), ATP17 (subunit f, part of the peripheral stalk), ATP18 (subunit i/j, part of the peripheral stalk), ATP19 (subunit k, dimer-specific, at interface between monomers), ATP20 (subunit g, at interface between monomers), TIM11 (subunit e, at interface between monomers).

It is found in the mitochondrion inner membrane. Functionally, mitochondrial membrane ATP synthase (F(1)F(0) ATP synthase or Complex V) produces ATP from ADP in the presence of a proton gradient across the membrane which is generated by electron transport complexes of the respiratory chain. F-type ATP synthases consist of two structural domains, F(1) - containing the extramembraneous catalytic core, and F(0) - containing the membrane proton channel, linked together by a central stalk and a peripheral stalk. During catalysis, ATP synthesis in the catalytic domain of F(1) is coupled via a rotary mechanism of the central stalk subunits to proton translocation. Part of the complex F(0) domain. A homomeric c-ring of 10 OLI1/ATP9 subunits is part of the complex rotary element. In Yarrowia lipolytica (strain CLIB 122 / E 150) (Yeast), this protein is ATP synthase subunit 9, mitochondrial.